A 655-amino-acid polypeptide reads, in one-letter code: p-hydroxybenzoic acid efflux pump subunit AaeB (655 aa).

Over 1-12 (MGIFSIANQHIR) the chain is Periplasmic. A helical membrane pass occupies residues 13-33 (FAVKLATAIVLALFVGFHFQL). Topologically, residues 34–37 (ETPR) are cytoplasmic. Residues 38–58 (WAVLTAAIVAAGPAFAAGGEP) form a helical membrane-spanning segment. Topologically, residues 59 to 68 (YSGAIRYRGF) are periplasmic. The chain crosses the membrane as a helical span at residues 69–89 (LRIIGTFIGCIAGLVIIIAMI). The Cytoplasmic portion of the chain corresponds to 90–92 (RAP). A helical transmembrane segment spans residues 93 to 113 (LLMILVCCIWAGFCTWISSLV). The Periplasmic segment spans residues 114-120 (RIENSYA). A helical transmembrane segment spans residues 121–141 (WGLAGYTALIIVITIQPEPLL). Residues 142-151 (TPQFAVERCS) are Cytoplasmic-facing. Residues 152-172 (EIVIGIVCAIMADLLFSPRSI) form a helical membrane-spanning segment. The Periplasmic segment spans residues 173–369 (KQEVDRELES…RTTLSCILGT (197 aa)). Residues 370-390 (LFWLWTGWTSGSGAMVMIAVV) form a helical membrane-spanning segment. The Cytoplasmic segment spans residues 391–406 (TSLAMRLPNPRMVAID). The chain crosses the membrane as a helical span at residues 407–427 (FIYGTLAALPLGLLYFLVIIP). Over 428–430 (NTQ) the chain is Periplasmic. Residues 431–451 (QSMLLLCISLAVLGFFLGIEV) traverse the membrane as a helical segment. The Cytoplasmic segment spans residues 452 to 458 (QKRRLGS). The chain crosses the membrane as a helical span at residues 459 to 479 (MGALASTINIIVLDNPMTFHF). Topologically, residues 480 to 481 (SQ) are periplasmic. A helical transmembrane segment spans residues 482–502 (FLDSALGQIVGCVLAFTVILL). Residues 503-655 (VRDKSRDRTG…HKYQHALTDS (153 aa)) are Cytoplasmic-facing.

This sequence belongs to the aromatic acid exporter ArAE (TC 2.A.85) family.

The protein localises to the cell inner membrane. Forms an efflux pump with AaeA. Could function as a metabolic relief valve, allowing to eliminate certain compounds when they accumulate to high levels in the cell. The polypeptide is p-hydroxybenzoic acid efflux pump subunit AaeB (Escherichia coli O6:H1 (strain CFT073 / ATCC 700928 / UPEC)).